Here is a 1518-residue protein sequence, read N- to C-terminus: MTGHVSKTSHVPKGRPSSLAKKAAKRAMAKVNSNPKRASGHLERVVQSVNDATKRLSQPDSTVSVATKSSKRKSRDTVGPWKLGKTLGKGSSGRVRLAKNMETGQLAAIKIVPKKKAFVHCSNNGTVPNSYSSSMVTSNVSSPSIASREHSNHSQTNPYGIEREIVIMKLISHTNVMALFEVWENKSELYLVLEYVDGGELFDYLVSKGKLPEREAIHYFKQIVEGVSYCHSFNICHRDLKPENLLLDKKNRRIKIADFGMAALELPNKLLKTSCGSPHYASPEIVMGRPYHGGPSDVWSCGIVLFALLTGHLPFNDDNIKKLLLKVQSGKYQMPSNLSSEARDLISKILVIDPEKRITTQEILKHPLIKKYDDLPVNKVLRKMRKDNMARGKSNSDLHLLNNVSPSIVTLHSKGEIDESILRSLQILWHGVSRELITAKLLQKPMSEEKLFYSLLLQYKQRHSISLSSSSENKKSATESSVNEPRIEYASKTANNTGLRSENNDVKTLHSLEIHSEDTSTVNQNNAITGVNTEINAPVLAQKSQFSINTLSQPESDKAEAEAVTLPPAIPIFNASSSRIFRNSYTSISSRSRRSLRLSNSRLSLSASTSRETVHDNEMPLPQLPKSPSRYSLSRRAIHASPSTKSIHKSLSRKNIAATVAARRTLQNSASKRSLYSLQSISKRSLNLNDLLVFDDPLPSKKPASENVNKSEPHSLESDSDFEILCDQILFGNALDRILEEEEDNEKERDTQRQRQNDTKSSADTFTISGVSTNKENEGPEYPTKIEKNQFNMSYKPSENMSGLSSFPIFEKENTLSSSYLEEQKPKRAALSDITNSFNKMNKQEGMRIEKKIQREQLQKKNDRPSPLKPIQHQELRVNSLPNDQGKPSLSLDPRRNISQPVNSKVESLLQGLKFKKEPASHWTHERGSLFMSEHVEDEKPVKASDVSIESSYVPLTTVATSSRDPSVLAESSTIQKPMLSLPSSFLNTSMTFKNLSQILADDGDDKHLSVPQNQSRSVAMSHPLRKQSAKISLTPRSNLNANLSVKRNQGSPGSYLSNDLDGISDMTFAMEIPTNTFTAQAIQLMNNDTDNNKINTSPKASSFTKEKVIKSAAYISKEKEPDNSDTNYIPDYTIPNTYDEKAINIFEDAPSDEGSLNTSSSESDSRASVHRKAVSIDTMATTNVLTPATNVRVSLYWNNNSSGIPRETTEEILSKLRLSPENPSNTHMQKRFSSTRGSRDSNALGISQSLQSMFKDLEEDQDGHTSQADILESSMSYSKRRPSEESVNPKQRVTMLFDEEEEESKKVGGGKIKEEHTKLDNKISEESSQLVLPVVEKKENANNTENNYSKIPKPSTIKVTKDTAMESNTQTHTKKPILKSVQNVEVEEAPSSDKKNWFVKLFQNFSSHNNATKASKNHVTNISFDDAHMLTLNEFNKNSIDYQLKNLDHKFGRKVVEYDCKFVKGNFKFKIKITSTPNASTVITVKKRSKHSNTSSNKAFEKFNDDVERVIRNAGRS.

Disordered stretches follow at residues 1-43 and 55-83; these read MTGH…GHLE and RLSQ…PWKL. Over residues 55–68 the composition is skewed to polar residues; sequence RLSQPDSTVSVATK. Residues 81-369 enclose the Protein kinase domain; sequence WKLGKTLGKG…TQEILKHPLI (289 aa). ATP-binding positions include 87-95 and lysine 110; that span reads LGKGSSGRV. Aspartate 239 functions as the Proton acceptor in the catalytic mechanism. The interval 467 to 502 is disordered; it reads LSSSSENKKSATESSVNEPRIEYASKTANNTGLRSE. The segment covering 492–501 has biased composition (polar residues); that stretch reads KTANNTGLRS. Serine 511 is subject to Phosphoserine. Low complexity predominate over residues 599 to 611; that stretch reads SNSRLSLSASTSR. A disordered region spans residues 599–651; sequence SNSRLSLSASTSRETVHDNEMPLPQLPKSPSRYSLSRRAIHASPSTKSIHKSL. 2 positions are modified to phosphoserine: serine 629 and serine 685. Positions 741–783 are disordered; sequence EEEDNEKERDTQRQRQNDTKSSADTFTISGVSTNKENEGPEYP. Basic and acidic residues predominate over residues 746–758; that stretch reads EKERDTQRQRQND. Residues 759 to 774 are compositionally biased toward polar residues; sequence TKSSADTFTISGVSTN. Serine 837 and serine 866 each carry phosphoserine. A compositionally biased stretch (basic and acidic residues) spans 856–876; the sequence is EQLQKKNDRPSPLKPIQHQEL. 4 disordered regions span residues 856–898, 1005–1030, 1150–1170, and 1220–1243; these read EQLQ…RRNI, DDKH…KQSA, APSD…RASV, and SPEN…RDSN. Residue serine 1220 is modified to Phosphoserine. Positions 1222–1243 are enriched in polar residues; the sequence is ENPSNTHMQKRFSSTRGSRDSN. Serine 1250 is modified (phosphoserine). Residues 1259–1291 form a disordered region; the sequence is EEDQDGHTSQADILESSMSYSKRRPSEESVNPK. Polar residues predominate over residues 1265 to 1278; the sequence is HTSQADILESSMSY. Residues serine 1284, serine 1287, and serine 1325 each carry the phosphoserine modification.

This sequence belongs to the protein kinase superfamily. CAMK Ser/Thr protein kinase family. NIM1 subfamily.

It is found in the bud neck. It carries out the reaction L-seryl-[protein] + ATP = O-phospho-L-seryl-[protein] + ADP + H(+). It catalyses the reaction L-threonyl-[protein] + ATP = O-phospho-L-threonyl-[protein] + ADP + H(+). The chain is Probable serine/threonine-protein kinase HSL1 (HSL1) from Saccharomyces cerevisiae (strain ATCC 204508 / S288c) (Baker's yeast).